Reading from the N-terminus, the 106-residue chain is Iron-sulfur cluster assembly protein CyaY (106 aa).

This sequence belongs to the frataxin family.

In terms of biological role, involved in iron-sulfur (Fe-S) cluster assembly. May act as a regulator of Fe-S biogenesis. The protein is Iron-sulfur cluster assembly protein CyaY of Salmonella paratyphi B (strain ATCC BAA-1250 / SPB7).